The chain runs to 238 residues: Sarcospan (238 aa).

Residues 1 to 33 (MGKDRQPRGQQRQGDAAGPDDPGPKKGAGTREQ) form a disordered region. Topologically, residues 1–48 (MGKDRQPRGQQRQGDAAGPDDPGPKKGAGTREQRGEEEAQTCCGCRFP) are extracellular. The segment covering 8 to 20 (RGQQRQGDAAGPD) has biased composition (low complexity). Residues 49–69 (LLLALLQLALGVAVTVVGFLM) traverse the membrane as a helical segment. The Cytoplasmic portion of the chain corresponds to 70–81 (ASVSSSLLVRAT). The chain crosses the membrane as a helical span at residues 82–102 (PYWAGIIVCVVAYLGLFMLCV). The Cytoplasmic segment spans residues 103-117 (SYQVDERTCIQFSMK). Residues 118 to 138 (LLYFVLSALGLVVCVLAVAFA) traverse the membrane as a helical segment. At 139–188 (AHHYSLLTHLTCENAPDSCQCKLPSSEPLSRTFVYRDVTDCTSITGTFQV) the chain is on the extracellular side. A helical transmembrane segment spans residues 189–209 (FLLVQMVLNLVCGLVCLVACF). Residues 210-238 (VMWKHRYQVFYVGVRMCPLSASEGQQQKV) are Cytoplasmic-facing.

Its subcellular location is the cell membrane. The protein localises to the sarcolemma. The protein resides in the postsynaptic cell membrane. Its function is as follows. Component of the dystrophin-glycoprotein complex (DGC), a complex that spans the muscle plasma membrane and forms a link between the F-actin cytoskeleton and the extracellular matrix. Preferentially associates with the sarcoglycan subcomplex of the DGC. In Oryctolagus cuniculus (Rabbit), this protein is Sarcospan (SSPN).